A 179-amino-acid chain; its full sequence is Large ribosomal subunit protein uL5 (179 aa).

The protein belongs to the universal ribosomal protein uL5 family. As to quaternary structure, part of the 50S ribosomal subunit; part of the 5S rRNA/L5/L18/L25 subcomplex. Contacts the 5S rRNA and the P site tRNA. Forms a bridge to the 30S subunit in the 70S ribosome.

Functionally, this is one of the proteins that bind and probably mediate the attachment of the 5S RNA into the large ribosomal subunit, where it forms part of the central protuberance. In the 70S ribosome it contacts protein S13 of the 30S subunit (bridge B1b), connecting the 2 subunits; this bridge is implicated in subunit movement. Contacts the P site tRNA; the 5S rRNA and some of its associated proteins might help stabilize positioning of ribosome-bound tRNAs. This is Large ribosomal subunit protein uL5 from Aeromonas salmonicida (strain A449).